Here is a 436-residue protein sequence, read N- to C-terminus: T-box transcription factor TBX6 (436 aa).

The T-box DNA-binding region spans 100-273 (LWKEFSSVGT…ANPFAKGFRE (174 aa)). Positions 271 to 284 (FRENGRNCKRERDA) are enriched in basic and acidic residues. Disordered stretches follow at residues 271 to 339 (FREN…APAP) and 360 to 379 (PSHLPTRSPSFPEAPDSGRS). The segment covering 325 to 339 (EQAPAPGEATAAPAP) has biased composition (low complexity).

In terms of assembly, forms a dimeric complex with DNA (in vitro). Expressed in fetal tail bud, posterior spinal tissue, intervertebral disk and testis. Also expressed in adult testis, kidney, lung, muscle and thymus.

It localises to the nucleus. In terms of biological role, T-box transcription factor that plays an essential role in the determination of the fate of axial stem cells: neural vs mesodermal. Acts in part by down-regulating, a specific enhancer (N1) of SOX2, to inhibit neural development. Seems to play also an essential role in left/right axis determination and acts through effects on Notch signaling around the node as well as through an effect on the morphology and motility of the nodal cilia. The protein is T-box transcription factor TBX6 (TBX6) of Homo sapiens (Human).